Reading from the N-terminus, the 538-residue chain is Ribulokinase 1 (538 aa).

It belongs to the ribulokinase family.

The enzyme catalyses D-ribulose + ATP = D-ribulose 5-phosphate + ADP + H(+). The catalysed reaction is L-ribulose + ATP = L-ribulose 5-phosphate + ADP + H(+). Its pathway is carbohydrate degradation; L-arabinose degradation via L-ribulose; D-xylulose 5-phosphate from L-arabinose (bacterial route): step 2/3. The chain is Ribulokinase 1 from Staphylococcus saprophyticus subsp. saprophyticus (strain ATCC 15305 / DSM 20229 / NCIMB 8711 / NCTC 7292 / S-41).